The sequence spans 213 residues: Vacuolar ATPase assembly integral membrane protein vph2 (213 aa).

The next 2 membrane-spanning stretches (helical) occupy residues 113–133 (ISAI…VWYC) and 142–162 (KIAL…FLYV).

The protein resides in the endoplasmic reticulum membrane. In terms of biological role, required for vacuolar ATPase assembly. This Schizosaccharomyces pombe (strain 972 / ATCC 24843) (Fission yeast) protein is Vacuolar ATPase assembly integral membrane protein vph2 (vph2).